A 108-amino-acid chain; its full sequence is Parvalbumin beta (108 aa).

EF-hand domains lie at 38–73 (KPTD…FCSS) and 77–108 (LSNA…LVRS). Ca(2+)-binding residues include Asp51, Asp53, Ser55, Tyr57, Glu59, Glu62, Asp90, Asp92, Asp94, Lys96, and Glu101.

It belongs to the parvalbumin family.

Its function is as follows. In muscle, parvalbumin is thought to be involved in relaxation after contraction. It binds two calcium ions. This is Parvalbumin beta from Amphiuma means (Salamander).